Consider the following 977-residue polypeptide: uncharacterized protein (977 aa).

The span at 1-24 (MMQQRSGSLSLLSNAVQAGQSSDP) shows a compositional bias: polar residues. Positions 1-65 (MMQQRSGSLS…HEKTKAGKDR (65 aa)) are disordered. Positions 72-99 (CQSCRKKKVKCSGERPSCDQCLKHNIPC) form a DNA-binding region, zn(2)-C6 fungal-type. The disordered stretch occupies residues 176–195 (LSHPTIVPSSNSSSLLNSTN). Residues 177–195 (SHPTIVPSSNSSSLLNSTN) are compositionally biased toward low complexity. A Phosphoserine modification is found at Ser-220. Disordered regions lie at residues 287-307 (TDSL…DSNR), 357-380 (NSAS…NNSL), and 751-774 (HTPI…ANGA). The segment covering 364–379 (STSYTNNNDTTSDNNS) has biased composition (low complexity). Over residues 751-770 (HTPINVTNGESQNNSNNDPS) the composition is skewed to polar residues.

The protein localises to the cytoplasm. It is found in the nucleus. This is an uncharacterized protein from Schizosaccharomyces pombe (strain 972 / ATCC 24843) (Fission yeast).